A 214-amino-acid chain; its full sequence is Large ribosomal subunit protein bL25 (214 aa).

2 disordered regions span residues 1-23 and 182-214; these read MSNE…SRRL and DHDQ…ASEE. Residues 200-214 show a composition bias toward acidic residues; it reads DDDDAAEGEEAASEE.

Belongs to the bacterial ribosomal protein bL25 family. CTC subfamily. As to quaternary structure, part of the 50S ribosomal subunit; part of the 5S rRNA/L5/L18/L25 subcomplex. Contacts the 5S rRNA. Binds to the 5S rRNA independently of L5 and L18.

Functionally, this is one of the proteins that binds to the 5S RNA in the ribosome where it forms part of the central protuberance. This chain is Large ribosomal subunit protein bL25, found in Alcanivorax borkumensis (strain ATCC 700651 / DSM 11573 / NCIMB 13689 / SK2).